The sequence spans 195 residues: Putative deoxynucleoside kinase (195 aa).

This Frog virus 3 (isolate Goorha) (FV-3) protein is Putative deoxynucleoside kinase.